A 121-amino-acid chain; its full sequence is Large ribosomal subunit protein bL19 (121 aa).

The protein belongs to the bacterial ribosomal protein bL19 family.

This protein is located at the 30S-50S ribosomal subunit interface and may play a role in the structure and function of the aminoacyl-tRNA binding site. This Chlorobaculum tepidum (strain ATCC 49652 / DSM 12025 / NBRC 103806 / TLS) (Chlorobium tepidum) protein is Large ribosomal subunit protein bL19.